The primary structure comprises 377 residues: MKNQALKILTLCVLVGSAMSLKLYAQKGLNHSEIEAKMIKALEWQEAHPIFALAPTDWTEGAYYIGVSRAHKTTQDMMYMAALKNQAYWNNWQTYSRLHHADDVAISYSYIYIGMNDKRPGFVNLEPTKKFLDAHLHEDDEWKAGTDKSASGKTILWWWCDALFMAPPVLNLYAKHTNQPKYRDEMHKYYMETYNQLYDKEERLFARDMRFVWKGTEKDLKEPNDKKIFWSRGNGWVLGGLALLLDDMPNDYKHRTFYENLFKDMASRILELQPKDGLWRTSLLSPETYDHGEVSGSGFYTFALAWGVNNGLLDRNKYEPAVKKAWKALADCQHEDGRVGWVQNIGASPEPASADSWQNFGTGAFLMAGSEVLKLEE.

A signal peptide spans 1-25; that stretch reads MKNQALKILTLCVLVGSAMSLKLYA. Asp161 acts as the Proton donor in catalysis.

Belongs to the glycosyl hydrolase 105 family.

The protein localises to the periplasm. Unsaturated beta-glucuronyl hydrolase involved in ulvan degradation. Ulvan is the main polysaccharide component of the Ulvales (green seaweed) cell wall. It is composed of disaccharide building blocks comprising 3-sulfated rhamnose (Rha3S) linked to D-glucuronic acid (GlcA), L-iduronic acid (IduA), or D-xylose (Xyl). Unsaturated 3S-rhamnoglycuronyl hydrolase works together with ulvan lyases to fully degrade the ulvan polymer, catalyzing specifically the cleavage of the unsaturated 4-deoxy-L-threo-hex-4-enopyranosiduronic acid (deltaUA) of deltaUA-Rha3S disaccharides and deltaUA-Rha3S-Xyl-Rha3S tetrasaccharides, the end products of the ulvan lyase reaction. Also hydrolases deltaUA-Rha3S-IduA-Rha3S and deltaUA-Rha3S-GlcA-Rha3S tetrasaccharidestetrasaccharides. Prefers tetrasaccharides over disaccharides and prefers an uronic residue at subsite +2. The chain is Unsaturated 3S-rhamnoglycuronyl hydrolase from Formosa agariphila (strain DSM 15362 / KCTC 12365 / LMG 23005 / KMM 3901 / M-2Alg 35-1).